The sequence spans 368 residues: Nuclease EXOG, mitochondrial (368 aa).

Residues 1–41 (MAIKSIASRLRGSRRFLSGFVAGAVVGAAGAGLAALQFFRS) constitute a mitochondrion transit peptide. Residue histidine 140 is the Proton acceptor of the active site. Position 171 (asparagine 171) interacts with a divalent metal cation.

The protein belongs to the DNA/RNA non-specific endonuclease family. In terms of assembly, homodimer. Requires a divalent metal cation as cofactor. As to expression, ubiquitous.

Its subcellular location is the mitochondrion inner membrane. In terms of biological role, endo/exonuclease with nicking activity towards supercoiled DNA, a preference for single-stranded DNA and 5'-3' exonuclease activity. The chain is Nuclease EXOG, mitochondrial (EXOG) from Homo sapiens (Human).